Reading from the N-terminus, the 89-residue chain is Small ribosomal subunit protein uS15 (89 aa).

It belongs to the universal ribosomal protein uS15 family. In terms of assembly, part of the 30S ribosomal subunit. Forms a bridge to the 50S subunit in the 70S ribosome, contacting the 23S rRNA.

In terms of biological role, one of the primary rRNA binding proteins, it binds directly to 16S rRNA where it helps nucleate assembly of the platform of the 30S subunit by binding and bridging several RNA helices of the 16S rRNA. Its function is as follows. Forms an intersubunit bridge (bridge B4) with the 23S rRNA of the 50S subunit in the ribosome. This chain is Small ribosomal subunit protein uS15, found in Bacillus pumilus (strain SAFR-032).